The sequence spans 163 residues: Urease accessory protein UreE (163 aa).

The disordered stretch occupies residues 130–163; that stretch reads PFEPEPGAYGGGHGHTHSHDHSHQHDPAGHAHEH. Residues 146–163 show a composition bias toward basic and acidic residues; that stretch reads HSHDHSHQHDPAGHAHEH.

Belongs to the UreE family.

The protein localises to the cytoplasm. Functionally, involved in urease metallocenter assembly. Binds nickel. Probably functions as a nickel donor during metallocenter assembly. This is Urease accessory protein UreE from Alkalilimnicola ehrlichii (strain ATCC BAA-1101 / DSM 17681 / MLHE-1).